We begin with the raw amino-acid sequence, 176 residues long: Shikimate kinase (176 aa).

Residue 17–24 (GMMGVGKS) participates in ATP binding.

It belongs to the shikimate kinase family.

The protein resides in the cytoplasm. The enzyme catalyses shikimate + ATP = 3-phosphoshikimate + ADP + H(+). It functions in the pathway metabolic intermediate biosynthesis; chorismate biosynthesis; chorismate from D-erythrose 4-phosphate and phosphoenolpyruvate: step 5/7. The protein is Shikimate kinase of Zymomonas mobilis subsp. mobilis (strain ATCC 31821 / ZM4 / CP4).